The following is a 304-amino-acid chain: Phosphoribosylaminoimidazole-succinocarboxamide synthase (304 aa).

It belongs to the SAICAR synthetase family.

It carries out the reaction 5-amino-1-(5-phospho-D-ribosyl)imidazole-4-carboxylate + L-aspartate + ATP = (2S)-2-[5-amino-1-(5-phospho-beta-D-ribosyl)imidazole-4-carboxamido]succinate + ADP + phosphate + 2 H(+). It functions in the pathway purine metabolism; IMP biosynthesis via de novo pathway; 5-amino-1-(5-phospho-D-ribosyl)imidazole-4-carboxamide from 5-amino-1-(5-phospho-D-ribosyl)imidazole-4-carboxylate: step 1/2. In Komagataella pastoris (Yeast), this protein is Phosphoribosylaminoimidazole-succinocarboxamide synthase (ADE1).